The sequence spans 334 residues: Fructose-1,6-bisphosphatase class 1 (334 aa).

Residues Glu90, Asp113, Leu115, and Asp116 each coordinate Mg(2+). Residues Asp116–Ser119, Asn209, Tyr242, and Lys272 each bind substrate. Residue Glu278 coordinates Mg(2+).

Belongs to the FBPase class 1 family. As to quaternary structure, homotetramer. Mg(2+) serves as cofactor.

Its subcellular location is the cytoplasm. It catalyses the reaction beta-D-fructose 1,6-bisphosphate + H2O = beta-D-fructose 6-phosphate + phosphate. It functions in the pathway carbohydrate biosynthesis; gluconeogenesis. This Actinobacillus pleuropneumoniae serotype 7 (strain AP76) protein is Fructose-1,6-bisphosphatase class 1.